The following is an 86-amino-acid chain: Cell division topological specificity factor (86 aa).

It belongs to the MinE family.

In terms of biological role, prevents the cell division inhibition by proteins MinC and MinD at internal division sites while permitting inhibition at polar sites. This ensures cell division at the proper site by restricting the formation of a division septum at the midpoint of the long axis of the cell. In Polaromonas sp. (strain JS666 / ATCC BAA-500), this protein is Cell division topological specificity factor.